Consider the following 136-residue polypeptide: Small ribosomal subunit protein uS9 (136 aa).

This sequence belongs to the universal ribosomal protein uS9 family.

In Borrelia garinii subsp. bavariensis (strain ATCC BAA-2496 / DSM 23469 / PBi) (Borreliella bavariensis), this protein is Small ribosomal subunit protein uS9.